Here is a 164-residue protein sequence, read N- to C-terminus: MNISIIVAMSQNLVIGQKNSIPWNIPKDLSWFKKHTIKKSIIMGRKTWESIGRVLPMRQNIVLTRQKNIKNTNVLFVNSISKAIQSALYKNEIMIIGGSNLYNQMLTSANKLYITHIEKYILGDTYFPTYDHLPWKIIFKKKIIEHEKTKNSFYVTFKILKKIT.

The DHFR domain maps to 2–162 (NISIIVAMSQ…FYVTFKILKK (161 aa)). Substrate is bound at residue 6–8 (IVA). NADP(+) is bound by residues 7–8 (VA) and 15–20 (IGQKNS). Position 28 (aspartate 28) interacts with substrate. 44–47 (GRKT) is a binding site for NADP(+). Substrate is bound at residue arginine 58. NADP(+) is bound by residues 63–66 (LTRQ) and 96–101 (IGGSNL). Threonine 115 is a substrate binding site.

It belongs to the dihydrofolate reductase family.

The catalysed reaction is (6S)-5,6,7,8-tetrahydrofolate + NADP(+) = 7,8-dihydrofolate + NADPH + H(+). It participates in cofactor biosynthesis; tetrahydrofolate biosynthesis; 5,6,7,8-tetrahydrofolate from 7,8-dihydrofolate: step 1/1. Its function is as follows. Key enzyme in folate metabolism. Catalyzes an essential reaction for de novo glycine and purine synthesis, and for DNA precursor synthesis. This is Dihydrofolate reductase (folA) from Buchnera aphidicola subsp. Baizongia pistaciae (strain Bp).